A 309-amino-acid polypeptide reads, in one-letter code: Glycine--tRNA ligase alpha subunit (309 aa).

The protein belongs to the class-II aminoacyl-tRNA synthetase family. In terms of assembly, tetramer of two alpha and two beta subunits.

The protein resides in the cytoplasm. It catalyses the reaction tRNA(Gly) + glycine + ATP = glycyl-tRNA(Gly) + AMP + diphosphate. This Anaeromyxobacter sp. (strain K) protein is Glycine--tRNA ligase alpha subunit.